The following is a 270-amino-acid chain: 4-hydroxy-tetrahydrodipicolinate reductase (270 aa).

NAD(+)-binding positions include 11–16 (GASGRM) and Glu37. Arg38 serves as a coordination point for NADP(+). NAD(+) is bound by residues 101–103 (GTT) and 125–128 (APNM). Residue His158 is the Proton donor/acceptor of the active site. A (S)-2,3,4,5-tetrahydrodipicolinate-binding site is contributed by His159. Residue Lys162 is the Proton donor of the active site. 168 to 169 (GT) contacts (S)-2,3,4,5-tetrahydrodipicolinate.

The protein belongs to the DapB family.

The protein localises to the cytoplasm. The enzyme catalyses (S)-2,3,4,5-tetrahydrodipicolinate + NAD(+) + H2O = (2S,4S)-4-hydroxy-2,3,4,5-tetrahydrodipicolinate + NADH + H(+). The catalysed reaction is (S)-2,3,4,5-tetrahydrodipicolinate + NADP(+) + H2O = (2S,4S)-4-hydroxy-2,3,4,5-tetrahydrodipicolinate + NADPH + H(+). Its pathway is amino-acid biosynthesis; L-lysine biosynthesis via DAP pathway; (S)-tetrahydrodipicolinate from L-aspartate: step 4/4. In terms of biological role, catalyzes the conversion of 4-hydroxy-tetrahydrodipicolinate (HTPA) to tetrahydrodipicolinate. This is 4-hydroxy-tetrahydrodipicolinate reductase from Shewanella amazonensis (strain ATCC BAA-1098 / SB2B).